The chain runs to 323 residues: Octaprenyl diphosphate synthase (323 aa).

Residues K45, R48, and H77 each contribute to the isopentenyl diphosphate site. Mg(2+) is bound by residues D84 and D88. R93 contributes to the an all-trans-polyprenyl diphosphate binding site. Isopentenyl diphosphate is bound at residue R94. 3 residues coordinate an all-trans-polyprenyl diphosphate: K170, T171, and Q208.

The protein belongs to the FPP/GGPP synthase family. Mg(2+) serves as cofactor.

It carries out the reaction 5 isopentenyl diphosphate + (2E,6E)-farnesyl diphosphate = all-trans-octaprenyl diphosphate + 5 diphosphate. Supplies octaprenyl diphosphate, the precursor for the side chain of the isoprenoid quinones ubiquinone and menaquinone. The polypeptide is Octaprenyl diphosphate synthase (ispB) (Escherichia coli (strain K12)).